We begin with the raw amino-acid sequence, 263 residues long: Hydroxyacylglutathione hydrolase (263 aa).

Residues H55, H57, D59, H60, H117, D134, and H172 each coordinate Zn(2+).

This sequence belongs to the metallo-beta-lactamase superfamily. Glyoxalase II family. In terms of assembly, monomer. Requires Zn(2+) as cofactor.

The enzyme catalyses an S-(2-hydroxyacyl)glutathione + H2O = a 2-hydroxy carboxylate + glutathione + H(+). It participates in secondary metabolite metabolism; methylglyoxal degradation; (R)-lactate from methylglyoxal: step 2/2. Thiolesterase that catalyzes the hydrolysis of S-D-lactoyl-glutathione to form glutathione and D-lactic acid. The protein is Hydroxyacylglutathione hydrolase of Shewanella baltica (strain OS223).